Here is an 865-residue protein sequence, read N- to C-terminus: MIKAIIGKIIGTRNDRWIKQYKKQVLAINALEPAYEKMSDDELQNAFEELKKRVRSTEKDLQEKTLLEVLPESFAITREASKRILKMRHFDVQLIGGMVLNDGKIAEMKTGEGKTLVATLAVALNALKGESVYVVTVNDYLAHRDSKEMEPLYQFLGYSVGTITASVRDDDERLEIYSKDIVYGTNNEFGFDYLRDNMKYSLEHKVQKSHAFAIVDEVDSILIDEARTPLIISGPVDRRMENYNKADEVAKSMQVETDFTIDEKNRAILITEEGIKKAENLFGVDNLYKIENAALSHHLDQALKANYLFFIDKDYIVANNEVVIVDEFTGRLSEGRRFSEGLHQALEAKEGVSIKEESQTLADITFQNYFRMFSKLSGMTGTAQTEATEFLEIYNLEVVSIPTNLAIKRKDLNDLIYKSEKEKFDAVILKIKELHDKGQPVLVGTASIEKSETLHALLKKERIPHTVLNAKQHTKEAEIIKDAGLKGAVTIATNMAGRGVDIKLTDEIKELGGLYIIGTERHESRRIDNQLRGRSGRQGDPGTSQFYLSLEDNLLRIFGSDRIKGVMEKLGLKDGEHIESKLVTRAVENAQKKVENLHFESRKHLLEYDDVANEQRKSVYKFRDELLDVNYDISAKIAENREYALNQIFSKLKAFDHQNLSEEELLGLKNVLKEDFNAHVSLEDLKKATPIEKFVAEKLKSDYENKMKVLDSEQRSRIERIVYLQILDNAWREHLYTMDNLKTGINLRGYNQKDPLVEYKKESYNLFLEFIEDIKMEAIKTFSKIQFENEQDSSDAERYLDNFSEEREHESVTYRHEETLDEDLNVAMKAFSKTPKRNEPCPCQSGKKYKDCCAKSGPKKGLFAK.

ATP is bound by residues glutamine 93, 111 to 115 (GEGKT), and aspartate 501. Zn(2+)-binding residues include cysteine 841, cysteine 843, cysteine 852, and cysteine 853.

This sequence belongs to the SecA family. In terms of assembly, monomer and homodimer. Part of the essential Sec protein translocation apparatus which comprises SecA, SecYEG and auxiliary proteins SecDF-YajC and YidC. Zn(2+) is required as a cofactor.

It localises to the cell inner membrane. Its subcellular location is the cytoplasm. It catalyses the reaction ATP + H2O + cellular proteinSide 1 = ADP + phosphate + cellular proteinSide 2.. Its function is as follows. Part of the Sec protein translocase complex. Interacts with the SecYEG preprotein conducting channel. Has a central role in coupling the hydrolysis of ATP to the transfer of proteins into and across the cell membrane, serving as an ATP-driven molecular motor driving the stepwise translocation of polypeptide chains across the membrane. In Helicobacter pylori (strain G27), this protein is Protein translocase subunit SecA.